Here is a 423-residue protein sequence, read N- to C-terminus: Immunity-related GTPase family M protein 3 (423 aa).

The IRG-type G domain occupies 83-260 (YRVKIAVTGD…PELRNTLQKD (178 aa)). GTP is bound by residues 92 to 99 (DSGNGMSS), 117 to 121 (TGVVR), and 200 to 202 (KLD).

This sequence belongs to the TRAFAC class dynamin-like GTPase superfamily. IRG family.

The protein localises to the endoplasmic reticulum. It localises to the cytoplasmic vesicle membrane. The protein resides in the lipid droplet. The enzyme catalyses GTP + H2O = GDP + phosphate + H(+). Functionally, immunity-related GTPase that plays important roles in host resistance to acute infection by protozoan, such as Toxoplasma gondii and Leishmania major. Acts as a dynamin-like protein that binds to intracellular membranes and promotes remodeling and trafficking of those membranes. Acts predominantly to restrict acute protozoan infection: expression is required in both hematopoietic and non-hematopoietic cellular compartments and is dependent on Stat1. Only plays a partial role in the control of latent Toxoplasma infection. Involved in the clearance of acute protozoan infections by regulating autophagy, possibly by promoting the fusion of phagosomes with lysosomes for efficient degradation of vacuoles containing parasites. Probably involved in membrane disruption of parasite-containing vacuoles. In addition to its role in resistance to acute infection by protozoan, also acts as a negative regulator of the integrated stress response (ISR) following coxsackievirus B3 infection. Promotes differentiation of activated CD8(+) T-cells. This is Immunity-related GTPase family M protein 3 from Mus musculus (Mouse).